Reading from the N-terminus, the 381-residue chain is O-phospho-L-seryl-tRNA:Cys-tRNA synthase (381 aa).

Pyridoxal 5'-phosphate is bound by residues 86–87, Asn192, and 215–217; these read AR and SGH. Lys218 bears the N6-(pyridoxal phosphate)lysine mark.

Belongs to the SepCysS family. In terms of assembly, homodimer. Interacts with SepRS. Pyridoxal 5'-phosphate is required as a cofactor.

It catalyses the reaction O-phospho-L-seryl-tRNA(Cys) + hydrogen sulfide + H(+) = L-cysteinyl-tRNA(Cys) + phosphate. In terms of biological role, converts O-phospho-L-seryl-tRNA(Cys) (Sep-tRNA(Cys)) to L-cysteinyl-tRNA(Cys) (Cys-tRNA(Cys)). The chain is O-phospho-L-seryl-tRNA:Cys-tRNA synthase from Methanococcus vannielii (strain ATCC 35089 / DSM 1224 / JCM 13029 / OCM 148 / SB).